A 415-amino-acid polypeptide reads, in one-letter code: Dynein assembly factor with WD repeat domains 1 (415 aa).

8 WD repeats span residues 90-129 (AHIL…ELHT), 132-174 (GHRN…HTFR), 175-214 (GHTA…EVVT), 217-256 (GHLA…KVHT), 259-298 (GHCA…CVAT), 301-340 (GHDD…CITK), 343-384 (GHEG…QVLE), and 386-415 (HTDE…RIWR).

The protein belongs to the WD repeat WDR69 family. In terms of assembly, interacts with IFT46.

It is found in the cytoplasm. Its subcellular location is the cytoskeleton. It localises to the flagellum basal body. The protein resides in the flagellum axoneme. Functionally, required for axonemal dynein assembly and ciliary motility in ciliated organs, including Kupffer's vesicle, during embryogenesis. Facilitates the onset of robust cilia motility during development. The sequence is that of Dynein assembly factor with WD repeat domains 1 (Daw1) from Rattus norvegicus (Rat).